A 381-amino-acid chain; its full sequence is Ceramide-binding protein svf-1 (381 aa).

The interval 1-18 is peripherally associates with membranes; that stretch reads MFKWAQAALANVAGTKEP.

This sequence belongs to the SVF1 family.

The protein resides in the golgi apparatus. The protein localises to the cis-Golgi network membrane. It localises to the endoplasmic reticulum membrane. It is found in the cytoplasm. Its subcellular location is the nucleus. Its function is as follows. Ceramide-binding protein that may transfer ceramides from the endoplasmic reticulum membrane to the cis-Golgi network membrane, and is thereby required for the biosynthesis of complex sphingolipids. The sequence is that of Ceramide-binding protein svf-1 (svf-1) from Neurospora crassa (strain ATCC 24698 / 74-OR23-1A / CBS 708.71 / DSM 1257 / FGSC 987).